The primary structure comprises 875 residues: Aminopeptidase M1-B (875 aa).

The segment at 96–203 (IGEGVLKMDF…MSTYLVAIVV (108 aa)) is required for membrane association. Substrate-binding positions include Glu-136 and 269–273 (GAMEN). His-305 contacts Zn(2+). Glu-306 functions as the Proton acceptor in the catalytic mechanism. Zn(2+)-binding residues include His-309 and Glu-328. A Dileucine internalization motif motif is present at residues 722-723 (LL).

Belongs to the peptidase M1 family. Homodimer. Zn(2+) serves as cofactor.

It is found in the membrane. It localises to the microsome membrane. The protein localises to the cytoplasm. The catalysed reaction is Release of an N-terminal amino acid, Xaa-|-Yaa- from a peptide, amide or arylamide. Xaa is preferably Ala, but may be most amino acids including Pro (slow action). When a terminal hydrophobic residue is followed by a prolyl residue, the two may be released as an intact Xaa-Pro dipeptide.. The chain is Aminopeptidase M1-B from Oryza sativa subsp. japonica (Rice).